Consider the following 131-residue polypeptide: MAAAATGLRQAAAAAASTSVKPIFSRDLNEAKRRVRELYRAWYREVPNTVHLMQLDITVKQGRDKVREMFMKNAHVTDPRVVDLLVIKGKMELQETIKVWKQRTHVMRFFHETETPRPKDFLSKFYMGHDP.

Belongs to the complex I LYR family. As to quaternary structure, mammalian complex I is composed of 45 different subunits.

The protein resides in the mitochondrion inner membrane. Its function is as follows. Accessory subunit of the mitochondrial membrane respiratory chain NADH dehydrogenase (Complex I), that is believed to be not involved in catalysis. Required for proper complex I assembly. Complex I functions in the transfer of electrons from NADH to the respiratory chain. The immediate electron acceptor for the enzyme is believed to be ubiquinone. This chain is NADH dehydrogenase [ubiquinone] 1 alpha subcomplex subunit 6, found in Mus musculus (Mouse).